We begin with the raw amino-acid sequence, 212 residues long: Actin-depolymerizing factor 1, isoforms a/b (212 aa).

The 157-residue stretch at 3 to 159 (SGVMVDPDVQ…SHKELLNNCP (157 aa)) folds into the ADF-H domain.

This sequence belongs to the actin-binding proteins ADF family. In terms of assembly, interacts with F-actin.

Its function is as follows. Depolymerizes growing actin filaments in muscle cells; required for the assembly of actin filaments into the functional contractile myofilament lattice of muscle. Competes with unc-87 for actin binding and inhibits the actin-bundling activity of unc-87. In Caenorhabditis elegans, this protein is Actin-depolymerizing factor 1, isoforms a/b.